A 455-amino-acid chain; its full sequence is CDP-diacylglycerol--serine O-phosphatidyltransferase (455 aa).

2 consecutive PLD phosphodiesterase domains span residues 134-160 (VFGV…NNVY) and 356-383 (GDNT…NPRA).

This sequence belongs to the CDP-alcohol phosphatidyltransferase class-II family. Multimeric.

It localises to the cytoplasm. The protein resides in the cell inner membrane. It catalyses the reaction a CDP-1,2-diacyl-sn-glycerol + L-serine = a 1,2-diacyl-sn-glycero-3-phospho-L-serine + CMP + H(+). In Haemophilus influenzae (strain ATCC 51907 / DSM 11121 / KW20 / Rd), this protein is CDP-diacylglycerol--serine O-phosphatidyltransferase (pssA).